The chain runs to 556 residues: MDKRHDPSRRIIAPHGTKLSCKSWFTEAPMRMLMNNLHPDVAERPEDLVVYGGIGRAARDWECYDKIIEVLQRLEEDETLLVQSGKPVGVFKTHSNAPRVIIANSNLVPHWANWEHFNELDKKGLAMYGQMTAGSWIYIGSQGIVQGTYETFAAMATKHFGGSSKGKWILTGGLGGMGGAQPLAGTMAGYSVLTCEVDETRIDFRLRTKYVDKKTDSLDEALAMIDEANKSGKPVSVGLLANAADVFAELVERGVTPDVVTDQTSAHDPLNGYLPQNWTLEYAAEMRKKDEAAVVKAAKQSMAVQVRAMLALQAAGAATTDYGNNIRQMAFEEGVENAFDFPGFVPAYVRPLFCEGIGPFRWVALSGDPEDIYKTDAKVKELIPDNPQLHNWLDMARERIAFQGLPSRICWVGLKDRARLALAFNEMVKSGELSAPVVIGRDHLDSGSVASPNRETESMLDGSDAVSDWPLMNALLNTASGATWVSLHHGGGVGMGFSQHSGVVIVADGSDEAAVRLGRVLWNDPATGVMRHADAGYDIAKKCAKEQNLDLPMLEK.

NAD(+) contacts are provided by residues 52–53, Gln130, 176–178, Glu196, Arg201, 242–243, 263–267, 273–274, and Tyr322; these read GG, GMG, NA, QTSAH, and YL. Cys410 is a catalytic residue. NAD(+) is bound at residue Gly492.

The protein belongs to the urocanase family. NAD(+) is required as a cofactor.

The protein localises to the cytoplasm. The enzyme catalyses 4-imidazolone-5-propanoate = trans-urocanate + H2O. It functions in the pathway amino-acid degradation; L-histidine degradation into L-glutamate; N-formimidoyl-L-glutamate from L-histidine: step 2/3. In terms of biological role, catalyzes the conversion of urocanate to 4-imidazolone-5-propionate. The protein is Urocanate hydratase of Shewanella sediminis (strain HAW-EB3).